The sequence spans 532 residues: MLDSSVPTFSVTTPLYYVNDVPHLGSAYTTVVADTLARFKRLQGYDVLMITGTDEHGQKIQRTAEAQELDPQTHCDRTVVKFKELWRSLNILYDRFSRTTDPRHLAIVKDFFQRVWDKGDIYLAQQQGWYCVACEEFKEKRDLLEDNHCPLHPNRKAEWRDEENYFFRLSRYQHPLEELYAQRPEFIQPSSRRNEVLNFVAQGLQDFSISRVNLDWGFPLPNDPNHTIYVWFDALLGYVTALLDEDEEPNLTNALVKWWPINLHLIGKDILRFHAVYWPAMLMSAELAIPAQVFGHGFLTKDGQKMGKSLGNTVDPLDLINRYGEDAFRYYFLKEIEFGKDGDFNEQRFVNVLNADLANDLGNLLNRTLGMVKKYCQGQGPQVMATDLAPDNPLKALGSHLGEEVSSAYERLSFTDACEAIFTLVRAGNKYIDDMAPWKLFKQGSQKEVEDVLYSVLESIRLSAYLLSPIVPRLSTKIYQQLGFTWDFDQWRSPLEQAEEFNRHQSWGQLGANQNLPPAQPIFTKLELPAEE.

Residues 16-26 carry the 'HIGH' region motif; sequence YYVNDVPHLGS. 4 residues coordinate Zn(2+): cysteine 131, cysteine 134, cysteine 149, and histidine 152. A 'KMSKS' region motif is present at residues 305 to 309; it reads KMGKS. Lysine 308 contacts ATP.

Belongs to the class-I aminoacyl-tRNA synthetase family. MetG type 2A subfamily. In terms of assembly, monomer. It depends on Zn(2+) as a cofactor.

It is found in the cytoplasm. It carries out the reaction tRNA(Met) + L-methionine + ATP = L-methionyl-tRNA(Met) + AMP + diphosphate. Is required not only for elongation of protein synthesis but also for the initiation of all mRNA translation through initiator tRNA(fMet) aminoacylation. This Synechocystis sp. (strain ATCC 27184 / PCC 6803 / Kazusa) protein is Methionine--tRNA ligase (metG).